The sequence spans 1137 residues: Calcium-activated potassium channel subunit alpha-1 (1137 aa).

At 1-44 (MSNNINANNLNTDSSSSPVNVPKMDALIIPVTMEVPCDSRGQRM) the chain is on the extracellular side. A helical membrane pass occupies residues 45–65 (WWAFLASSMVTFFGGLFIILL). The Cytoplasmic portion of the chain corresponds to 66 to 137 (WRTLKYLWTV…MISAQTLTGR (72 aa)). A helical transmembrane segment spans residues 138–158 (VLVVLVFALSIGALVIYFIDS). Residues 159–173 (SNPIESCQNFYKDFT) lie on the Extracellular side of the membrane. The helical transmembrane segment at 174–194 (LQIDMAFNVFFLLYFGLRFIA) threads the bilayer. The Cytoplasmic segment spans residues 195–198 (ANDK). The chain crosses the membrane as a helical span at residues 199–219 (LWFWLEVNSVVDFFTVPPVFV). Residues 220-223 (SVYL) lie on the Extracellular side of the membrane. A helical; Voltage-sensor transmembrane segment spans residues 224–244 (NRSWLGLRFLRALRLIQFSEI). Residues 245-259 (LQFLNILKTSNSIKL) lie on the Cytoplasmic side of the membrane. The helical transmembrane segment at 260–280 (VNLCSIFISTWLTAAGFIHLV) threads the bilayer. Over 281-294 (ENSGDPWENFQNNQ) the chain is Extracellular. The pore-forming intramembrane region spans 295 to 317 (QLTYWECVYLLMVTMSTVGYGDV). Positions 311–314 (TVGY) match the Selectivity for potassium motif. Residues 318 to 326 (YAKTTLGRL) lie on the Extracellular side of the membrane. A helical transmembrane segment spans residues 327-347 (FMVFFILGGLAMFASYVPEII). Over 348-1137 (ELIGNRKKYG…KQKYVQEDRL (790 aa)) the chain is Cytoplasmic. The 143-residue stretch at 366 to 508 (RKHIVVCGHI…WNWKEGDDAI (143 aa)) folds into the RCK N-terminal 1 domain. Residues E398, Q421, and E423 each contribute to the Mg(2+) site. Residues 515–535 (LGFIAQSCLAPGLSTMLANLF) are segment S7. Residues 572-592 (LSFPAVCELVFAKLKLLMIAI) form a segment S8 region. The heme-binding motif stretch occupies residues 636-640 (CKACH). Positions 660 to 688 (EQPSTLSPKKKQRNGGMRNSPNSSPKLMR) are disordered. Residues 738–758 (VLSGHVVVCIFGDVKSALIGL) are segment S9. Residues 740–884 (SGHVVVCIFG…MDRSSPDNSP (145 aa)) enclose the RCK N-terminal 2 domain. A Calcium bowl motif is present at residues 904-926 (TELVNDSNVQFLDQDDDDDPDTE). Ca(2+) is bound by residues Q913, D916, D919, and D921. Positions 933–953 (FACGTAFAVSVLDSLMSATYF) are segment S10. Over residues 1088-1112 (ASLSHSSHSSYSSSKKSSSVHSIPS) the composition is skewed to low complexity. Residues 1088–1137 (ASLSHSSHSSYSSSKKSSSVHSIPSTANRPNRTKTRDSREKQKYVQEDRL) form a disordered region. Over residues 1121–1137 (KTRDSREKQKYVQEDRL) the composition is skewed to basic and acidic residues.

Belongs to the potassium channel family. Calcium-activated (TC 1.A.1.3) subfamily. KCa1.1/KCNMA1 sub-subfamily. In terms of assembly, homotetramer; which constitutes the calcium-activated potassium channel.

It localises to the cell membrane. It carries out the reaction K(+)(in) = K(+)(out). Ethanol and carbon monoxide-bound heme increase channel activation. Heme inhibits channel activation. In terms of biological role, potassium channel activated by both membrane depolarization or increase in cytosolic Ca(2+) that mediates export of K(+). It is also activated by the concentration of cytosolic Mg(2+). Its activation dampens the excitatory events that elevate the cytosolic Ca(2+) concentration and/or depolarize the cell membrane. It therefore contributes to repolarization of the membrane potential. Plays a key role in controlling excitability in a number of systems, such as regulation of the contraction of smooth muscle, the tuning of hair cells in the cochlea, regulation of transmitter release, and innate immunity. In smooth muscles, its activation by high level of Ca(2+), caused by ryanodine receptors in the sarcoplasmic reticulum, regulates the membrane potential. In cochlea cells, its number and kinetic properties partly determine the characteristic frequency of each hair cell and thereby helps to establish a tonotopic map. Highly sensitive to both iberiotoxin (IbTx) and charybdotoxin (CTX). The chain is Calcium-activated potassium channel subunit alpha-1 (KCNMA1) from Gallus gallus (Chicken).